A 274-amino-acid polypeptide reads, in one-letter code: Diaminopimelate epimerase (274 aa).

Positions 11, 44, and 64 each coordinate substrate. C73 (proton donor) is an active-site residue. Residues 74–75 (GN), N157, N190, and 208–209 (ER) each bind substrate. The active-site Proton acceptor is C217. 218 to 219 (GS) is a binding site for substrate.

It belongs to the diaminopimelate epimerase family. Homodimer.

It is found in the cytoplasm. The catalysed reaction is (2S,6S)-2,6-diaminopimelate = meso-2,6-diaminopimelate. It participates in amino-acid biosynthesis; L-lysine biosynthesis via DAP pathway; DL-2,6-diaminopimelate from LL-2,6-diaminopimelate: step 1/1. In terms of biological role, catalyzes the stereoinversion of LL-2,6-diaminopimelate (L,L-DAP) to meso-diaminopimelate (meso-DAP), a precursor of L-lysine and an essential component of the bacterial peptidoglycan. The chain is Diaminopimelate epimerase from Mannheimia succiniciproducens (strain KCTC 0769BP / MBEL55E).